The sequence spans 275 residues: Diaminopimelate epimerase (275 aa).

The substrate site is built by Asn12, Gln45, and Asn65. Cys74 acts as the Proton donor in catalysis. Residues 75 to 76 (GN), Asn158, Asn191, and 209 to 210 (ER) each bind substrate. Cys218 functions as the Proton acceptor in the catalytic mechanism. Residue 219-220 (GT) participates in substrate binding.

This sequence belongs to the diaminopimelate epimerase family. Homodimer.

Its subcellular location is the cytoplasm. It carries out the reaction (2S,6S)-2,6-diaminopimelate = meso-2,6-diaminopimelate. It functions in the pathway amino-acid biosynthesis; L-lysine biosynthesis via DAP pathway; DL-2,6-diaminopimelate from LL-2,6-diaminopimelate: step 1/1. Functionally, catalyzes the stereoinversion of LL-2,6-diaminopimelate (L,L-DAP) to meso-diaminopimelate (meso-DAP), a precursor of L-lysine and an essential component of the bacterial peptidoglycan. This is Diaminopimelate epimerase from Shewanella frigidimarina (strain NCIMB 400).